The primary structure comprises 329 residues: Beta-ketoacyl-[acyl-carrier-protein] synthase III (329 aa).

Active-site residues include cysteine 113 and histidine 256. Positions 257–261 are ACP-binding; it reads QANQR. Asparagine 286 is a catalytic residue.

It belongs to the thiolase-like superfamily. FabH family. Homodimer.

It is found in the cytoplasm. It carries out the reaction malonyl-[ACP] + acetyl-CoA + H(+) = 3-oxobutanoyl-[ACP] + CO2 + CoA. Its pathway is lipid metabolism; fatty acid biosynthesis. Its function is as follows. Catalyzes the condensation reaction of fatty acid synthesis by the addition to an acyl acceptor of two carbons from malonyl-ACP. Catalyzes the first condensation reaction which initiates fatty acid synthesis and may therefore play a role in governing the total rate of fatty acid production. Possesses both acetoacetyl-ACP synthase and acetyl transacylase activities. Its substrate specificity determines the biosynthesis of branched-chain and/or straight-chain of fatty acids. The polypeptide is Beta-ketoacyl-[acyl-carrier-protein] synthase III (Natranaerobius thermophilus (strain ATCC BAA-1301 / DSM 18059 / JW/NM-WN-LF)).